A 438-amino-acid polypeptide reads, in one-letter code: MAYEEYLKDFLEISNITVGDTVKVTKPHIEHEGMLLEKPDYSNENTIILKLDSGYNIGIDIKDAKIEKISEGKKPQIELDPVDKKISDKKKNLSILSTGGTVASVIDYKTGAVHPAFTADDLLRATPELVDYANINAKAIFNILSENMTPEYWKKTATTIYDEINNGADGIIIAHGTDTMHYTASALSFMIDSPVPIVLTGAQRSSDRPSSDAFTNLMASVNAAKSDIAEVTICMHGTEDDSYCDLHRGTRARKMHTSRRDTFTSINMNPLARIENNKVTINDTQVKYTKRNEKELSLNTNLADKVALIKMYPGISPEIIDIYVDKNYDGIVIEGTGLGHCSDDVITSITRATSEDIPVVMTSQCLFGRTNMNVYSSGRRLLQNNVIGVGDMLPETAYTKLLWAAGQTDNVSEIYEIMKTNLKGEMDTTLSQNYFIKN.

In terms of domain architecture, Asparaginase/glutaminase spans 91 to 421; the sequence is KNLSILSTGG…SEIYEIMKTN (331 aa). Residues threonine 101, threonine 177, aspartate 178, and lysine 254 contribute to the active site.

This sequence belongs to the asparaginase 1 family. GatD subfamily. In terms of assembly, heterodimer of GatD and GatE.

It carries out the reaction L-glutamyl-tRNA(Gln) + L-glutamine + ATP + H2O = L-glutaminyl-tRNA(Gln) + L-glutamate + ADP + phosphate + H(+). Allows the formation of correctly charged Gln-tRNA(Gln) through the transamidation of misacylated Glu-tRNA(Gln) in organisms which lack glutaminyl-tRNA synthetase. The reaction takes place in the presence of glutamine and ATP through an activated gamma-phospho-Glu-tRNA(Gln). The GatDE system is specific for glutamate and does not act on aspartate. The polypeptide is Glutamyl-tRNA(Gln) amidotransferase subunit D (Methanosphaera stadtmanae (strain ATCC 43021 / DSM 3091 / JCM 11832 / MCB-3)).